The following is a 256-amino-acid chain: Aspirochlorine biosynthesis protein F (256 aa).

N19 is a glycosylation site (N-linked (GlcNAc...) asparagine). 3 consecutive transmembrane segments (helical) span residues 21–41, 163–183, and 214–234; these read SITP…GPHF, LVWV…FFFT, and FGLG…ILAV.

The protein resides in the membrane. The protein operates within mycotoxin biosynthesis. Functionally, part of the gene cluster that mediates the biosynthesis of aspirochlorine (or antibiotic A30641), an unusual halogenated spiro compound with distinctive antifungal properties due to selective inhibition of protein biosynthesis, and which is also active against bacteria, viruses, and murine tumor cells. The non-ribosomal peptide synthetase (NRPS) aclP is responsible the formation of the diketopiperazine (DKP) core from the condensation of 2 phenylalanine residues. One Phe residue is tailored into chlorotyrosine by hydroxylation and chlorination, whereas the second Phe undergoes an unprecedented C-C bond cleavage to be converted into glycine. After formation of the DKP, sulfur is incorporated into the DKP by conjugation with glutathione by aclG, followed by its stepwise degradation to the thiol by aclI, aclJ and aclK, and the dithiol oxidation by aclT. In addition, oxygenases (aclB, aclC, aclL and aclO) and O-methyltransferases (aclM and aclU) act as tailoring enzymes to produce the intermediate dechloroaspirochlorine. Ultimately, chlorination of dechloroaspirochlorine by the halogenase aclH is the last step in the aspirochlorine pathway. This chain is Aspirochlorine biosynthesis protein F, found in Aspergillus oryzae (strain ATCC 42149 / RIB 40) (Yellow koji mold).